A 407-amino-acid polypeptide reads, in one-letter code: Peptidase T (407 aa).

H82 is a binding site for Zn(2+). D84 is a catalytic residue. D143 contributes to the Zn(2+) binding site. The Proton acceptor role is filled by E177. Residues E178, D200, and H382 each contribute to the Zn(2+) site.

This sequence belongs to the peptidase M20B family. The cofactor is Zn(2+).

Its subcellular location is the cytoplasm. The catalysed reaction is Release of the N-terminal residue from a tripeptide.. Its function is as follows. Cleaves the N-terminal amino acid of tripeptides. The sequence is that of Peptidase T from Streptococcus pyogenes serotype M18 (strain MGAS8232).